Here is a 228-residue protein sequence, read N- to C-terminus: Cytochrome c oxidase subunit 2 (228 aa).

At 1–26 (MPNWGQVMFQDAASSVMLQLVSFHDH) the chain is on the mitochondrial intermembrane side. A helical transmembrane segment spans residues 27–47 (ALLVLTLVLTVVGYALLALML). Over 48-60 (NKQVNRYIMEAQT) the chain is Mitochondrial matrix. Residues 61–81 (VETIWTILPALILLVLALPSL) form a helical membrane-spanning segment. The Mitochondrial intermembrane segment spans residues 82-228 (RILYITDEVS…FMSWVSNFKP (147 aa)). Positions 161, 196, 198, 200, 204, and 207 each coordinate Cu cation. Mg(2+) is bound at residue glutamate 198.

This sequence belongs to the cytochrome c oxidase subunit 2 family. In terms of assembly, component of the cytochrome c oxidase (complex IV, CIV), a multisubunit enzyme composed of a catalytic core of 3 subunits and several supernumerary subunits. The complex exists as a monomer or a dimer and forms supercomplexes (SCs) in the inner mitochondrial membrane with ubiquinol-cytochrome c oxidoreductase (cytochrome b-c1 complex, complex III, CIII). Cu cation is required as a cofactor.

Its subcellular location is the mitochondrion inner membrane. The catalysed reaction is 4 Fe(II)-[cytochrome c] + O2 + 8 H(+)(in) = 4 Fe(III)-[cytochrome c] + 2 H2O + 4 H(+)(out). Its function is as follows. Component of the cytochrome c oxidase, the last enzyme in the mitochondrial electron transport chain which drives oxidative phosphorylation. The respiratory chain contains 3 multisubunit complexes succinate dehydrogenase (complex II, CII), ubiquinol-cytochrome c oxidoreductase (cytochrome b-c1 complex, complex III, CIII) and cytochrome c oxidase (complex IV, CIV), that cooperate to transfer electrons derived from NADH and succinate to molecular oxygen, creating an electrochemical gradient over the inner membrane that drives transmembrane transport and the ATP synthase. Cytochrome c oxidase is the component of the respiratory chain that catalyzes the reduction of oxygen to water. Electrons originating from reduced cytochrome c in the intermembrane space (IMS) are transferred via the dinuclear copper A center (CU(A)) of subunit 2 and heme A of subunit 1 to the active site in subunit 1, a binuclear center (BNC) formed by heme A3 and copper B (CU(B)). The BNC reduces molecular oxygen to 2 water molecules using 4 electrons from cytochrome c in the IMS and 4 protons from the mitochondrial matrix. The sequence is that of Cytochrome c oxidase subunit 2 (COII) from Lumbricus terrestris (Common earthworm).